Consider the following 210-residue polypeptide: Large ribosomal subunit protein uL3 (210 aa).

The segment at 125–151 is disordered; it reads RHGQSRGPMSHGSRYHRRPGSMGPVAP.

The protein belongs to the universal ribosomal protein uL3 family. Part of the 50S ribosomal subunit. Forms a cluster with proteins L14 and L19.

One of the primary rRNA binding proteins, it binds directly near the 3'-end of the 23S rRNA, where it nucleates assembly of the 50S subunit. The chain is Large ribosomal subunit protein uL3 from Bacillus cereus (strain Q1).